The chain runs to 1191 residues: Homeodomain-interacting protein kinase 3 (1191 aa).

Residue lysine 27 forms a Glycyl lysine isopeptide (Lys-Gly) (interchain with G-Cter in SUMO2) linkage. The Protein kinase domain maps to 197-525; sequence YEVLDFLGRG…PIETLNHPFV (329 aa). ATP contacts are provided by residues 203–211 and lysine 226; that span reads LGRGTFGQV. Aspartate 322 functions as the Proton acceptor in the catalytic mechanism. A Phosphotyrosine modification is found at tyrosine 359. Residues 766-920 are interaction with AR; it reads QNRSNSLQNT…NSMSDDEQES (155 aa). Residues 774 to 867 are interaction with FAS; that stretch reads NTNVPHSAFI…SPRPSLRECK (94 aa). The disordered stretch occupies residues 801–828; sequence TQDNHTSEGEARTCHEASVRQDSSVSDK. Residues 802-828 show a composition bias toward basic and acidic residues; sequence QDNHTSEGEARTCHEASVRQDSSVSDK. Residues 846–856 form an interaction with UBL1 region; sequence ITISSDTDDEE. Residues 888-905 show a composition bias toward low complexity; it reads SSPDSTLSTSSSGQSSPS. Disordered stretches follow at residues 888–960 and 993–1022; these read SSPD…TCAG and TCQPLTKGQPAPGKLNQPSASAARQQKPTS. A compositionally biased stretch (polar residues) spans 1008-1022; sequence NQPSASAARQQKPTS.

Belongs to the protein kinase superfamily. CMGC Ser/Thr protein kinase family. HIPK subfamily. Interacts with Nkx1-2. Interacts with FAS and DAXX. Probably part of a complex consisting of HIPK3, FAS and FADD. Interacts with UBL1/SUMO-1. Interacts with and stabilizes ligand-bound androgen receptor (AR). Autophosphorylated. Autophosphorylation is not required for catalytic activity. In terms of processing, may be sumoylated.

The protein resides in the nucleus. It carries out the reaction L-seryl-[protein] + ATP = O-phospho-L-seryl-[protein] + ADP + H(+). The enzyme catalyses L-threonyl-[protein] + ATP = O-phospho-L-threonyl-[protein] + ADP + H(+). In terms of biological role, seems to negatively regulate apoptosis by promoting FADD phosphorylation. Enhances androgen receptor-mediated transcription. May act as a transcriptional corepressor for NK homeodomain transcription factors. This Rattus norvegicus (Rat) protein is Homeodomain-interacting protein kinase 3 (Hipk3).